A 339-amino-acid polypeptide reads, in one-letter code: D-alanine--D-alanine ligase (339 aa).

The 208-residue stretch at 126–333 (KQVLDSAGIP…YSELVTRLVE (208 aa)) folds into the ATP-grasp domain. 158-213 (AAELGYPLFVKPANLGSSVGISKVGSPEELDAALTLAFGLDRRVILEAMTPHKPRE) is a binding site for ATP. Mg(2+)-binding residues include Asp-286, Glu-300, and Asn-302.

This sequence belongs to the D-alanine--D-alanine ligase family. Mg(2+) serves as cofactor. The cofactor is Mn(2+).

Its subcellular location is the cytoplasm. The enzyme catalyses 2 D-alanine + ATP = D-alanyl-D-alanine + ADP + phosphate + H(+). It functions in the pathway cell wall biogenesis; peptidoglycan biosynthesis. Its function is as follows. Cell wall formation. This chain is D-alanine--D-alanine ligase, found in Deinococcus radiodurans (strain ATCC 13939 / DSM 20539 / JCM 16871 / CCUG 27074 / LMG 4051 / NBRC 15346 / NCIMB 9279 / VKM B-1422 / R1).